A 541-amino-acid polypeptide reads, in one-letter code: Arginine--tRNA ligase (541 aa).

Residues 123–133 (ANPTGFLHIGH) carry the 'HIGH' region motif.

It belongs to the class-I aminoacyl-tRNA synthetase family. In terms of assembly, monomer.

It localises to the cytoplasm. The catalysed reaction is tRNA(Arg) + L-arginine + ATP = L-arginyl-tRNA(Arg) + AMP + diphosphate. The protein is Arginine--tRNA ligase of Metamycoplasma arthritidis (strain 158L3-1) (Mycoplasma arthritidis).